The sequence spans 58 residues: Large ribosomal subunit protein uL30 (58 aa).

It belongs to the universal ribosomal protein uL30 family. Part of the 50S ribosomal subunit.

The protein is Large ribosomal subunit protein uL30 of Pseudomonas putida (strain ATCC 700007 / DSM 6899 / JCM 31910 / BCRC 17059 / LMG 24140 / F1).